Reading from the N-terminus, the 770-residue chain is ARF GTPase-activating protein GIT1 (770 aa).

The 124-residue stretch at 1 to 124 (MSRKGPRAEV…AFVHKLPCRD (124 aa)) folds into the Arf-GAP domain. The interaction with gamma-tubulin and localization to the centrosome stretch occupies residues 1 to 124 (MSRKGPRAEV…AFVHKLPCRD (124 aa)). The C4-type zinc finger occupies 11 to 34 (CADCSAPDPGWASISRGVLVCDEC). ANK repeat units lie at residues 132-161 (DLSKQLHSSVRTGNLETCLRLLSLGAQANF), 166-195 (KGTTPLHVAAKAGQTLQAELLVVYGADPGS), and 199-228 (NGRTPIDYARQAGHHELAERLVECQYELTD). Tyr-224 carries the phosphotyrosine modification. Residues 245 to 374 (HYIIPQMADR…QGKSLSSPTD (130 aa)) are interaction with PCLO. The interaction with PTK2/FAK1 stretch occupies residues 253 to 424 (DRSRQKCMSQ…NRARSMDSSD (172 aa)). The segment at 254 to 376 (RSRQKCMSQS…KSLSSPTDNL (123 aa)) is interaction with ARHGEF7. Positions 363-425 (RQQGKSLSSP…RARSMDSSDL (63 aa)) are disordered. The segment covering 366-383 (GKSLSSPTDNLELSARNQ) has biased composition (polar residues). Ser-368 and Ser-371 each carry phosphoserine. Thr-373 carries the phosphothreonine modification. The tract at residues 375-596 (NLELSARNQS…QEGSRHASKL (222 aa)) is interaction with NCK2 and GRIN3A. The interval 375 to 596 (NLELSARNQS…QEGSRHASKL (222 aa)) is required for localization at synapses. Ser-379 and Ser-384 each carry phosphoserine. Position 392 is a phosphotyrosine (Tyr-392). Phosphoserine occurs at positions 394 and 397. Over residues 394–403 (SVASDEDTDQ) the composition is skewed to acidic residues. Thr-401 is subject to Phosphothreonine. 3 positions are modified to phosphoserine: Ser-419, Ser-422, and Ser-426. Residues 420–475 (MDSSDLSDGAVTLQEYLELKKALATSEAKVQQLMKVNSSLSDELRKLQREIHKLQA) form an interaction with MAPK1 region. Residues 429–629 (AVTLQEYLEL…EGKRFLELSK (201 aa)) form an interaction with IKBKG region. Positions 449–483 (VQQLMKVNSSLSDELRKLQREIHKLQAENLQLRQP) form a coiled coil. Phosphoserine is present on residues Ser-507 and Ser-545. Thr-546 is subject to Phosphothreonine. Phosphotyrosine occurs at positions 554 and 563. Ser-570, Ser-580, Ser-601, and Ser-605 each carry phosphoserine. Low complexity predominate over residues 574-586 (VTFTPSSPLLSSS). Residues 574 to 615 (VTFTPSSPLLSSSQEGSRHASKLSRHGSGAESDYENTQSGEP) are disordered. Thr-610 carries the phosphothreonine modification. Ser-639 is modified (phosphoserine). Residues 646-770 (PGLPSTEDVI…VTITTREKKQ (125 aa)) form an interaction with PXN and TGFB1I1 region.

As to quaternary structure, forms homodimers and possibly oligomers. May form heterooligomers with GIT2. Interacts with G protein-coupled receptor kinases, including GRK2, GRK3, GRK5 and GRK6. Interacts with PPFIA1, PPFIA2 and PPFIA4. Interacts with GRIP1 and forms a ternary complex with PPFIA1 and GRIP1. Directly interacts with ARHGEF7/beta-PIX, forming in vitro a heptameric complex made of a GIT1 dimer and an ARHGEF7 trimer. Directly interacts with PXN/paxillin; this interaction is enhanced in the presence of ARHGEF7. Directly interacts (via C-terminus) with TGFB1I1/Hic-5 (via LD motif 3). Directly interacts with PTK2/FAK1. May interact with PTK2B/PYK2; this interaction may be indirect. Interacts with AMPA receptors GRIA2/3. Directly interacts with protein Piccolo/PCLO. Forms a complex with Ephrin-B1/EFNB1 and NCK2/GRB4 (via SH2); this interaction is important for spine morphogenesis and synapse formation. Interaction with NCK2 is transient and depends upon GIT1 phosphorylation at Tyr-392. Interacts with GRIN3A/GluN3A (via C-terminus); this interaction competes with GIT1 interaction with ARHGEF7 and limits synaptic localization of GIT1. Interacts with IKBKG/NEMO in resting bone mesenchymal stem cells, as well as in TNF-stimulated cells; this interaction may increase IKBKG affinity for 'Lys-63'-linked polyubiquitin chains. Interacts with GABA(A) receptors, including GABRB3 and GABRG2. Interacts with SCRIB. Interacts (via N- and C-terminus) with ENTR1/SDCCAG3 (via N-terminus); this interaction is direct. May form a tripartite complex with ENTR1 and PTPN13. Interacts with YWHAZ. Interacts with PAK1 and PAK3. Directly interacts (via N-terminus) with gamma-tubulin. Interacts with MAPK1 and MAPK3; this interaction is required for MAPK1/3 recruitment to focal adhesions. Post-translationally, phosphorylated on tyrosine residues by PTK2/FAK1 and SRC in growing fibroblasts. Phosphorylation at Tyr-392 is induced by activation of Ephrin-B1/EFNB1 and catalyzed by SRC family kinases. It is required for the interaction with NCK2 and for GIT1 recruitment to synapses in hippocampal neurons. As to expression, widely expressed. Expressed at high levels in testis (at protein level). Expressed in the brain, including in CA1 hippocampal neurons, in the amygdala, and thalamic nuclei (at protein level).

It localises to the cytoplasm. Its subcellular location is the synapse. It is found in the presynapse. The protein localises to the postsynapse. The protein resides in the postsynaptic density. It localises to the cell junction. Its subcellular location is the focal adhesion. It is found in the cell projection. The protein localises to the lamellipodium. The protein resides in the cytoskeleton. It localises to the microtubule organizing center. Its subcellular location is the centrosome. It is found in the spindle pole. Functionally, GTPase-activating protein for ADP ribosylation factor family members, including ARF1. Multidomain scaffold protein that interacts with numerous proteins and therefore participates in many cellular functions, including receptor internalization, focal adhesion remodeling, and signaling by both G protein-coupled receptors and tyrosine kinase receptors. Through PAK1 activation, positively regulates microtubule nucleation during interphase. Plays a role in the regulation of cytokinesis; for this function, may act in a pathway also involving ENTR1 and PTPN13. May promote cell motility both by regulating focal complex dynamics and by the activation of RAC1. May act as scaffold for MAPK1/3 signal transduction, recruiting MAPK1/3 to focal adhesions after EGF stimulation via a Src-dependent pathway, hence stimulating cell migration. Plays a role in brain development and function. Involved in the regulation of spine density and synaptic plasticity that is required for processes involved in learning. Plays an important role in dendritic spine morphogenesis and synapse formation. In hippocampal neurons, recruits guanine nucleotide exchange factors (GEFs), such as ARHGEF7/beta-PIX, to the synaptic membrane. These in turn locally activate RAC1, which is an essential step for spine morphogenesis and synapse formation. May contribute to the organization of presynaptic active zones through oligomerization and formation of a Piccolo/PCLO-based protein network, which includes ARHGEF7/beta-PIX and FAK1. In neurons, through its interaction with liprin-alpha family members, may be required for AMPA receptor (GRIA2/3) proper targeting to the cell membrane. In complex with GABA(A) receptors and ARHGEF7, plays a crucial role in regulating GABA(A) receptor synaptic stability, maintaining GPHN/gephyrin scaffolds and hence GABAergic inhibitory synaptic transmission, by locally coordinating RAC1 and PAK1 downstream effector activity, leading to F-actin stabilization. May also be important for RAC1 downstream signaling pathway through PAK3 and regulation of neuronal inhibitory transmission at presynaptic input. Required for successful bone regeneration during fracture healing. The function in intramembranous ossification may, at least partly, exerted by macrophages in which GIT1 is a key negative regulator of redox homeostasis, IL1B production, and glycolysis, acting through the ERK1/2/NRF2/NFE2L2 axis. May also play a role in angiogenesis during fracture healing. In this process, may regulate activation of the canonical NF-kappa-B signal in bone mesenchymal stem cells by enhancing the interaction between NEMO and 'Lys-63'-ubiquitinated RIPK1/RIP1, eventually leading to enhanced production of VEGFA and others angiogenic factors. Essential for VEGF signaling through the activation of phospholipase C-gamma and ERK1/2, hence may control endothelial cell proliferation and angiogenesis. The protein is ARF GTPase-activating protein GIT1 of Rattus norvegicus (Rat).